Reading from the N-terminus, the 471-residue chain is MKIKTRFAPSPTGYLHVGGARTALYSWLFARHHGGEFVLRIEDTDLERSTPEAIEAIMDGMNWLNLEWDEGPYFQTKRFDRYNAVIDEMLEAGTAYKCYCSKERLEQLREDQMAKGEKPRYDGRCRHSHEHHADDEPCVVRFANPQDGSVIFDDQIRGPIEFSNQELDDLIIRRTDGSPTYNFCVVVDDWDMEITHVIRGEDHINNTPRQINILKALNAPVPMYAHVSMINGDDGKKLSKRHGAVSVMQYRDDGYLPEALLNYLVRLGWSSGDQEIFTREEMIKLFSLGAVSKSASAFNTDKLLWLNHHYINTLAPEYVATHLQWHIEQENIDTRNGPQLAELVKLLGERCKTLKEMAQSCRYFYEDFSEFDADAAKKHLRPVARQPLEVVRDKLSAITDWSAENVHHAIQATADELEVGMGKVGMPLRVAVTGAGQSPALDVTVHAIGKTRSIERINKALGFIAERESQQ.

The short motif at P9–G19 is the 'HIGH' region element. C98, C100, C125, and H127 together coordinate Zn(2+). Positions K237 to R241 match the 'KMSKS' region motif. K240 is a binding site for ATP.

The protein belongs to the class-I aminoacyl-tRNA synthetase family. Glutamate--tRNA ligase type 1 subfamily. In terms of assembly, monomer. The cofactor is Zn(2+).

It localises to the cytoplasm. It carries out the reaction tRNA(Glu) + L-glutamate + ATP = L-glutamyl-tRNA(Glu) + AMP + diphosphate. Catalyzes the attachment of glutamate to tRNA(Glu) in a two-step reaction: glutamate is first activated by ATP to form Glu-AMP and then transferred to the acceptor end of tRNA(Glu). This is Glutamate--tRNA ligase from Salmonella schwarzengrund (strain CVM19633).